A 324-amino-acid chain; its full sequence is Adducin-related protein C1289.14 (324 aa).

It belongs to the aldolase class II family. Adducin subfamily.

In Schizosaccharomyces pombe (strain 972 / ATCC 24843) (Fission yeast), this protein is Adducin-related protein C1289.14.